Consider the following 396-residue polypeptide: Elongation factor Tu (396 aa).

The 197-residue stretch at 10-206 (KPHVNIGTIG…AVDESVPDPI (197 aa)) folds into the tr-type G domain. The tract at residues 19 to 26 (GHVDHGKT) is G1. Residue 19–26 (GHVDHGKT) coordinates GTP. Thr-26 contributes to the Mg(2+) binding site. Residues 62-66 (GITIN) are G2. The segment at 83–86 (DAPG) is G3. GTP-binding positions include 83–87 (DAPGH) and 138–141 (NKSD). Residues 138 to 141 (NKSD) form a G4 region. Residues 176–178 (SGL) are G5.

Belongs to the TRAFAC class translation factor GTPase superfamily. Classic translation factor GTPase family. EF-Tu/EF-1A subfamily. Monomer.

Its subcellular location is the cytoplasm. The enzyme catalyses GTP + H2O = GDP + phosphate + H(+). In terms of biological role, GTP hydrolase that promotes the GTP-dependent binding of aminoacyl-tRNA to the A-site of ribosomes during protein biosynthesis. This chain is Elongation factor Tu, found in Renibacterium salmoninarum (strain ATCC 33209 / DSM 20767 / JCM 11484 / NBRC 15589 / NCIMB 2235).